The following is a 1462-amino-acid chain: Glucosyltransferase-S (1462 aa).

The disordered stretch occupies residues 35-164 (SSVSAETEQQ…RQTAAQENKN (130 aa)). Residues 37–52 (VSAETEQQTSDKVVTQ) are compositionally biased toward polar residues. A compositionally biased stretch (low complexity) spans 71–85 (TKQAQTEQTQAQSQA). The span at 86 to 108 (NVADTSTSITKETPSQNITTQAN) shows a compositional bias: polar residues. The segment covering 109–133 (SDDKTVTNTKSEEAQTSEERTKQAE) has biased composition (basic and acidic residues). The segment covering 134–149 (EAQATASSQALTQAKA) has biased composition (low complexity). Polar residues predominate over residues 154–163 (QRQTAAQENK). 14 Cell wall-binding repeats span residues 171-190 (IPNVKQIDGKYYYIGSDGQP), 192-211 (KNFALTVNNKVLYFDKNTGA), 1095-1115 (STGFVNDGNGMTFYSTSGYQA), 1116-1136 (KNSFVQDAKGNWYYFDNNGHM), 1137-1156 (VYGLQHLNGEVQYFLSNGVQ), 1180-1201 (SNGYYSFDNDSKWRYFDASGVM), 1202-1221 (AVGLKTINGNTQYFDQDGYQ), 1223-1244 (KGAWITGSDGKKRYFDDGSGNM), 1246-1266 (VNRFANDKNGDWYYLNSDGIA), 1267-1286 (LVGVQTINGKTYYFGQDGKQ), 1310-1330 (RNIFATDSQNNWYYFGSDGVA), 1331-1350 (VTGSQTIAGKKLYFASDGKQ), 1352-1372 (KGSFVTYNGKVHYYHADSGEL), and 1374-1394 (VNRFEADKDGNWYYLDSNGEA).

It belongs to the glycosyl hydrolase 70 family.

Its subcellular location is the secreted. It carries out the reaction [(1-&gt;6)-alpha-D-glucosyl](n) + sucrose = [(1-&gt;6)-alpha-D-glucosyl](n+1) + D-fructose. Its function is as follows. Production of extracellular glucans, that are thought to play a key role in the development of the dental plaque because of their ability to adhere to smooth surfaces and mediate the aggregation of bacterial cells and food debris. The polypeptide is Glucosyltransferase-S (gtfD) (Streptococcus mutans serotype c (strain ATCC 700610 / UA159)).